The sequence spans 138 residues: Putative pre-16S rRNA nuclease (138 aa).

Belongs to the YqgF nuclease family.

The protein resides in the cytoplasm. Functionally, could be a nuclease involved in processing of the 5'-end of pre-16S rRNA. The protein is Putative pre-16S rRNA nuclease of Shigella dysenteriae serotype 1 (strain Sd197).